The following is a 397-amino-acid chain: Phosphoglycerate kinase (397 aa).

Substrate contacts are provided by residues 21 to 23 (DFN), Arg-37, 60 to 63 (HLGR), Arg-119, and Arg-152. ATP contacts are provided by residues Lys-202, Gly-294, Glu-325, and 351 to 354 (GGDS).

This sequence belongs to the phosphoglycerate kinase family. As to quaternary structure, monomer.

Its subcellular location is the cytoplasm. The catalysed reaction is (2R)-3-phosphoglycerate + ATP = (2R)-3-phospho-glyceroyl phosphate + ADP. Its pathway is carbohydrate degradation; glycolysis; pyruvate from D-glyceraldehyde 3-phosphate: step 2/5. The sequence is that of Phosphoglycerate kinase from Pseudothermotoga lettingae (strain ATCC BAA-301 / DSM 14385 / NBRC 107922 / TMO) (Thermotoga lettingae).